A 414-amino-acid chain; its full sequence is Serine hydroxymethyltransferase (414 aa).

(6S)-5,6,7,8-tetrahydrofolate contacts are provided by residues leucine 121 and 125–127 (GHL). Lysine 229 carries the N6-(pyridoxal phosphate)lysine modification.

The protein belongs to the SHMT family. In terms of assembly, homodimer. The cofactor is pyridoxal 5'-phosphate.

It localises to the cytoplasm. It carries out the reaction (6R)-5,10-methylene-5,6,7,8-tetrahydrofolate + glycine + H2O = (6S)-5,6,7,8-tetrahydrofolate + L-serine. Its pathway is one-carbon metabolism; tetrahydrofolate interconversion. It functions in the pathway amino-acid biosynthesis; glycine biosynthesis; glycine from L-serine: step 1/1. Catalyzes the reversible interconversion of serine and glycine with tetrahydrofolate (THF) serving as the one-carbon carrier. This reaction serves as the major source of one-carbon groups required for the biosynthesis of purines, thymidylate, methionine, and other important biomolecules. Also exhibits THF-independent aldolase activity toward beta-hydroxyamino acids, producing glycine and aldehydes, via a retro-aldol mechanism. This Janthinobacterium sp. (strain Marseille) (Minibacterium massiliensis) protein is Serine hydroxymethyltransferase.